Consider the following 500-residue polypeptide: L-arabinose isomerase (500 aa).

Mn(2+) contacts are provided by glutamate 306, glutamate 333, histidine 350, and histidine 450.

This sequence belongs to the arabinose isomerase family. Homohexamer. The cofactor is Mn(2+).

It catalyses the reaction beta-L-arabinopyranose = L-ribulose. It functions in the pathway carbohydrate degradation; L-arabinose degradation via L-ribulose; D-xylulose 5-phosphate from L-arabinose (bacterial route): step 1/3. In terms of biological role, catalyzes the conversion of L-arabinose to L-ribulose. The sequence is that of L-arabinose isomerase from Shigella flexneri serotype 5b (strain 8401).